A 202-amino-acid polypeptide reads, in one-letter code: Large ribosomal subunit protein uL4 (202 aa).

Residues 40-71 (GRQGSKAQKTRSQVSGGGKKPWRQKGSGRARA) are disordered. Polar residues predominate over residues 44–53 (SKAQKTRSQV).

It belongs to the universal ribosomal protein uL4 family. As to quaternary structure, part of the 50S ribosomal subunit.

Functionally, one of the primary rRNA binding proteins, this protein initially binds near the 5'-end of the 23S rRNA. It is important during the early stages of 50S assembly. It makes multiple contacts with different domains of the 23S rRNA in the assembled 50S subunit and ribosome. Forms part of the polypeptide exit tunnel. In Hahella chejuensis (strain KCTC 2396), this protein is Large ribosomal subunit protein uL4.